A 219-amino-acid polypeptide reads, in one-letter code: Small ribosomal subunit protein uS5 (219 aa).

An S5 DRBM domain is found at 52–115; it reads LDDEVLDINM…DVAKLNLISV (64 aa). Residues 196–219 are disordered; it reads LRNASQSRTPRRAAAKQREQEVSE.

It belongs to the universal ribosomal protein uS5 family. As to quaternary structure, part of the 30S ribosomal subunit. Contacts protein S4.

Its function is as follows. With S4 and S12 plays an important role in translational accuracy. In Haloquadratum walsbyi (strain DSM 16790 / HBSQ001), this protein is Small ribosomal subunit protein uS5.